The chain runs to 230 residues: Small ribosomal subunit protein uS3c (230 aa).

The KH type-2 domain occupies 39 to 109 (IRSFIHSKLS…QLRVNVVEIA (71 aa)).

It belongs to the universal ribosomal protein uS3 family. As to quaternary structure, part of the 30S ribosomal subunit.

Its subcellular location is the plastid. It is found in the chloroplast. This is Small ribosomal subunit protein uS3c (rps3) from Pyropia yezoensis (Susabi-nori).